A 107-amino-acid chain; its full sequence is Essential MCU regulator, mitochondrial (107 aa).

The transit peptide at 1–47 (MASGAARWLALVRVGSGASRSWLSLRKGGDVSAGRSCSGQSLVPTRS) directs the protein to the mitochondrion. The Mitochondrial matrix segment spans residues 48–65 (VIVTRSGAILPKPVKMSF). Residues 66–85 (GLLRVFSIVIPFLYVGTLIS) form a helical membrane-spanning segment. The GXXXX[G/A/S] motif lies at 81-85 (GTLIS). Residues 86–107 (KNFAALLEEHDIFVPEDDDDDD) are Mitochondrial intermembrane-facing.

It belongs to the SMDT1/EMRE family. In terms of assembly, component of the uniplex complex, composed of MCU, EMRE/SMDT1, MICU1 and MICU2 (or MICU3) in a 4:4:1:1 stoichiometry. The number of EMRE/SMDT1 molecules is hovewer variable, ranging from 1 to 4 copies per uniplex complex, leading to uniplex complexes with distinct gatekeeping profiles. Interacts (via its C-terminal poly-Asp tail) with MCUR1; the interaction is direct. Unprocessed form interacts (via transit peptide) with MAIP1. Post-translationally, undergoes proteolytic degradation in neurons: degraded by AFG3L2 and SPG7 before SMDT1/EMRE assembly with the uniporter complex, limiting the availability of SMDT1/EMRE for MCU assembly and promoting efficient assembly of gatekeeper subunits with MCU.

It is found in the mitochondrion inner membrane. Its function is as follows. Essential regulatory subunit of the mitochondrial calcium uniporter complex (uniplex), a complex that mediates calcium uptake into mitochondria. Required to bridge the calcium-sensing proteins MICU1 with the calcium-conducting subunit MCU. Acts by mediating activation of MCU and retention of MICU1 to the MCU pore, in order to ensure tight regulation of the uniplex complex and appropriate responses to intracellular calcium signaling. The protein is Essential MCU regulator, mitochondrial of Bos taurus (Bovine).